A 91-amino-acid chain; its full sequence is YcgL domain-containing protein Ent638_2370 (91 aa).

Residues 1-85 (MFCVIYRSAK…PPENLLKQHL (85 aa)) enclose the YcgL domain.

This is YcgL domain-containing protein Ent638_2370 from Enterobacter sp. (strain 638).